Consider the following 182-residue polypeptide: Ribosome-recycling factor (182 aa).

This sequence belongs to the RRF family.

It is found in the cytoplasm. Functionally, responsible for the release of ribosomes from messenger RNA at the termination of protein biosynthesis. May increase the efficiency of translation by recycling ribosomes from one round of translation to another. The sequence is that of Ribosome-recycling factor from Parasynechococcus marenigrum (strain WH8102).